The primary structure comprises 628 residues: Hemocyanin II (628 aa).

Thr-1 is subject to Blocked amino end (Thr); partial. Positions 173, 177, 204, 324, 328, and 364 each coordinate Cu cation. N-linked (GlcNAc...) asparagine glycosylation occurs at Asn-449. Disulfide bonds link Cys-534–Cys-576 and Cys-536–Cys-583.

It belongs to the tyrosinase family. Hemocyanin subfamily. In terms of assembly, hexamer or a multiple thereof. In terms of tissue distribution, hemolymph.

Its subcellular location is the secreted. It is found in the extracellular space. Hemocyanins are copper-containing oxygen carriers occurring freely dissolved in the hemolymph of many mollusks and arthropods. The chain is Hemocyanin II from Limulus polyphemus (Atlantic horseshoe crab).